The chain runs to 139 residues: Small ribosomal subunit protein uS12 (139 aa).

Asp102 bears the 3-methylthioaspartic acid mark. A disordered region spans residues 116-139 (DTTGVAKRSQGRSKYGAKRPKKSK). Positions 124–139 (SQGRSKYGAKRPKKSK) are enriched in basic residues.

The protein belongs to the universal ribosomal protein uS12 family. In terms of assembly, part of the 30S ribosomal subunit. Contacts proteins S8 and S17. May interact with IF1 in the 30S initiation complex.

With S4 and S5 plays an important role in translational accuracy. Its function is as follows. Interacts with and stabilizes bases of the 16S rRNA that are involved in tRNA selection in the A site and with the mRNA backbone. Located at the interface of the 30S and 50S subunits, it traverses the body of the 30S subunit contacting proteins on the other side and probably holding the rRNA structure together. The combined cluster of proteins S8, S12 and S17 appears to hold together the shoulder and platform of the 30S subunit. The polypeptide is Small ribosomal subunit protein uS12 (Mesomycoplasma hyopneumoniae (strain 7448) (Mycoplasma hyopneumoniae)).